Consider the following 225-residue polypeptide: 7-cyano-7-deazaguanine synthase (225 aa).

Residue 10–20 (LSGGIDSATAA) participates in ATP binding. Cysteine 191, cysteine 199, cysteine 202, and cysteine 205 together coordinate Zn(2+).

It belongs to the QueC family. The cofactor is Zn(2+).

The catalysed reaction is 7-carboxy-7-deazaguanine + NH4(+) + ATP = 7-cyano-7-deazaguanine + ADP + phosphate + H2O + H(+). It participates in purine metabolism; 7-cyano-7-deazaguanine biosynthesis. In terms of biological role, catalyzes the ATP-dependent conversion of 7-carboxy-7-deazaguanine (CDG) to 7-cyano-7-deazaguanine (preQ(0)). The sequence is that of 7-cyano-7-deazaguanine synthase from Prochlorococcus marinus (strain NATL1A).